Reading from the N-terminus, the 117-residue chain is Small nuclear ribonucleoprotein Sm D1 (117 aa).

Positions 2-74 (KLVRFLMKLT…IRYYILPDSL (73 aa)) constitute a Sm domain. A disordered region spans residues 81–117 (IDDSTKPKQKKKEVVRGRGRGRGRGTRGRGRGASRGF). Positions 87 to 117 (PKQKKKEVVRGRGRGRGRGTRGRGRGASRGF) are enriched in basic residues.

The protein belongs to the snRNP core protein family. As to quaternary structure, belongs to the 40S cdc5-associated complex (or cwf complex), a spliceosome sub-complex reminiscent of a late-stage spliceosome composed of the U2, U5 and U6 snRNAs and at least brr2, cdc5, cwf2/prp3, cwf3/syf1, cwf4/syf3, cwf5/ecm2, spp42/cwf6, cwf7/spf27, cwf8, cwf9, cwf10, cwf11, cwf12, prp45/cwf13, cwf14, cwf15, cwf16, cwf17, cwf18, cwf19, cwf20, cwf21, cwf22, cwf23, cwf24, cwf25, cwf26, cyp7/cwf27, cwf28, cwf29/ist3, lea1, msl1, prp5/cwf1, prp10, prp12/sap130, prp17, prp22, sap61, sap62, sap114, sap145, slu7, smb1, smd1, smd3, smf1, smg1 and syf2. Interacts with saf5; the interaction is direct.

The protein resides in the nucleus. It localises to the cytoplasm. Functionally, plays a role in pre-mRNA splicing as a core component of the spliceosomal U1, U2, U4 and U5 small nuclear ribonucleoproteins (snRNPs), the building blocks of the spliceosome. This is Small nuclear ribonucleoprotein Sm D1 (smd1) from Schizosaccharomyces pombe (strain 972 / ATCC 24843) (Fission yeast).